A 448-amino-acid polypeptide reads, in one-letter code: Homogentisate 1,2-dioxygenase (448 aa).

Positions 1-26 (MNMLAPAAKNAFTPASPDRPAYQSGF) are disordered. H302 serves as the catalytic Proton acceptor. Fe cation-binding residues include H345 and E351. Y360 and H381 together coordinate homogentisate. H381 lines the Fe cation pocket.

Belongs to the homogentisate dioxygenase family. Hexamer; dimer of trimers. It depends on Fe cation as a cofactor.

It catalyses the reaction homogentisate + O2 = 4-maleylacetoacetate + H(+). It participates in amino-acid degradation; L-phenylalanine degradation; acetoacetate and fumarate from L-phenylalanine: step 4/6. In terms of biological role, involved in the catabolism of homogentisate (2,5-dihydroxyphenylacetate or 2,5-OH-PhAc), a central intermediate in the degradation of phenylalanine and tyrosine. Catalyzes the oxidative ring cleavage of the aromatic ring of homogentisate to yield maleylacetoacetate. This Ralstonia nicotianae (strain ATCC BAA-1114 / GMI1000) (Ralstonia solanacearum) protein is Homogentisate 1,2-dioxygenase.